The following is a 199-amino-acid chain: Recombination protein RecR (199 aa).

A C4-type zinc finger spans residues 57–72 (CAECRTFTEEEVCHIC). Residues 81 to 176 (GQICVVESPA…EASRIAHGVP (96 aa)) form the Toprim domain.

It belongs to the RecR family.

In terms of biological role, may play a role in DNA repair. It seems to be involved in an RecBC-independent recombinational process of DNA repair. It may act with RecF and RecO. This is Recombination protein RecR from Vibrio parahaemolyticus serotype O3:K6 (strain RIMD 2210633).